We begin with the raw amino-acid sequence, 57 residues long: Large ribosomal subunit protein bL32 (57 aa).

Positions 1 to 38 are disordered; sequence MAVQQNKPTRSKRGMRRSHDALTAVTSLSVDKTSGEKH.

This sequence belongs to the bacterial ribosomal protein bL32 family.

This chain is Large ribosomal subunit protein bL32, found in Escherichia coli O7:K1 (strain IAI39 / ExPEC).